The chain runs to 166 residues: SsrA-binding protein (166 aa).

Residues 146–166 (KRAAEKEKQSKKDVKAAMERY) form a disordered region.

It belongs to the SmpB family.

The protein resides in the cytoplasm. In terms of biological role, required for rescue of stalled ribosomes mediated by trans-translation. Binds to transfer-messenger RNA (tmRNA), required for stable association of tmRNA with ribosomes. tmRNA and SmpB together mimic tRNA shape, replacing the anticodon stem-loop with SmpB. tmRNA is encoded by the ssrA gene; the 2 termini fold to resemble tRNA(Ala) and it encodes a 'tag peptide', a short internal open reading frame. During trans-translation Ala-aminoacylated tmRNA acts like a tRNA, entering the A-site of stalled ribosomes, displacing the stalled mRNA. The ribosome then switches to translate the ORF on the tmRNA; the nascent peptide is terminated with the 'tag peptide' encoded by the tmRNA and targeted for degradation. The ribosome is freed to recommence translation, which seems to be the essential function of trans-translation. This chain is SsrA-binding protein, found in Synechococcus sp. (strain CC9605).